A 539-amino-acid polypeptide reads, in one-letter code: Chaperonin GroEL (539 aa).

Residues 29–32 (TLGP), 86–90 (DGTTT), glycine 413, 479–481 (DAL), and aspartate 495 contribute to the ATP site.

It belongs to the chaperonin (HSP60) family. Forms a cylinder of 14 subunits composed of two heptameric rings stacked back-to-back. Interacts with the co-chaperonin GroES.

The protein localises to the cytoplasm. It catalyses the reaction ATP + H2O + a folded polypeptide = ADP + phosphate + an unfolded polypeptide.. Functionally, together with its co-chaperonin GroES, plays an essential role in assisting protein folding. The GroEL-GroES system forms a nano-cage that allows encapsulation of the non-native substrate proteins and provides a physical environment optimized to promote and accelerate protein folding. The chain is Chaperonin GroEL from Pseudothermotoga lettingae (strain ATCC BAA-301 / DSM 14385 / NBRC 107922 / TMO) (Thermotoga lettingae).